Here is a 108-residue protein sequence, read N- to C-terminus: MLTKILNNFKSINIRFFTRPGCSLCQSAKEIIYPAVEEDFPTNRFTIEEIDIDKENNKQYFDKFKNDVPVGMIDQKIIFKHRIDEDKLYYDLETILRQQIKKEKEEKE.

Cysteines 22 and 25 form a disulfide.

It belongs to the glutaredoxin family. YDR286C subfamily.

This Dictyostelium discoideum (Social amoeba) protein is Glutaredoxin-like protein YDR286C homolog.